The primary structure comprises 257 residues: 1-(5-phosphoribosyl)-5-[(5-phosphoribosylamino)methylideneamino] imidazole-4-carboxamide isomerase (257 aa).

The active-site Proton acceptor is the Asp8. Residue Asp130 is the Proton donor of the active site.

Belongs to the HisA/HisF family.

It localises to the cytoplasm. The enzyme catalyses 1-(5-phospho-beta-D-ribosyl)-5-[(5-phospho-beta-D-ribosylamino)methylideneamino]imidazole-4-carboxamide = 5-[(5-phospho-1-deoxy-D-ribulos-1-ylimino)methylamino]-1-(5-phospho-beta-D-ribosyl)imidazole-4-carboxamide. It participates in amino-acid biosynthesis; L-histidine biosynthesis; L-histidine from 5-phospho-alpha-D-ribose 1-diphosphate: step 4/9. This is 1-(5-phosphoribosyl)-5-[(5-phosphoribosylamino)methylideneamino] imidazole-4-carboxamide isomerase from Chlorobium chlorochromatii (strain CaD3).